A 1442-amino-acid polypeptide reads, in one-letter code: Chitin synthase regulator SKT5 (1442 aa).

2 disordered regions span residues methionine 1–leucine 54 and leucine 72–glutamine 117. A compositionally biased stretch (basic and acidic residues) spans asparagine 12–histidine 25. Over residues lysine 39–threonine 53 the composition is skewed to polar residues. Residues lysine 75 to serine 99 are compositionally biased toward basic and acidic residues. 7 Sel1-like repeats span residues valine 198 to histidine 236, proline 237 to histidine 272, proline 273 to threonine 309, proline 313 to tyrosine 350, alanine 351 to histidine 387, lysine 388 to leucine 425, and alanine 426 to aspartate 461. The tract at residues glutamate 550–lysine 1402 is disordered. Pro residues predominate over residues proline 605–glutamate 617. Over residues phenylalanine 633–lysine 648 the composition is skewed to basic residues. A compositionally biased stretch (low complexity) spans glycine 747 to proline 758. Basic and acidic residues-rich tracts occupy residues glycine 762–lysine 804, glycine 821–aspartate 840, and arginine 859–glutamate 875. The span at serine 876 to proline 891 shows a compositional bias: low complexity. 3 stretches are compositionally biased toward pro residues: residues proline 964 to alanine 977, arginine 1139 to proline 1158, and alanine 1200 to proline 1220. The segment covering proline 1232 to glycine 1243 has biased composition (polar residues). Pro residues predominate over residues proline 1271 to phenylalanine 1282. Over residues arginine 1295–serine 1305 the composition is skewed to low complexity. 2 stretches are compositionally biased toward pro residues: residues methionine 1306–proline 1322 and aspartate 1371–threonine 1386. The span at glycine 1392–lysine 1402 shows a compositional bias: polar residues.

The protein belongs to the SKT5 family.

It is found in the cell membrane. Functionally, activator of the chitin synthase CHS3 which polymerizes chitin, a structural polymer of the fungal cell wall. The chain is Chitin synthase regulator SKT5 from Malassezia restricta (strain ATCC 96810 / NBRC 103918 / CBS 7877) (Seborrheic dermatitis infection agent).